The following is a 431-amino-acid chain: Transmembrane protease serine 11C (431 aa).

Topologically, residues 1–33 (MARGQPRRSEEQWTALQNRTECKTKIKLTRCGK) are cytoplasmic. A helical; Signal-anchor for type II membrane protein membrane pass occupies residues 34-54 (ITLGILTAVLAAVLIGLIAYF). Residues 55–431 (AACGKDSFYY…RDWITSKTGL (377 aa)) lie on the Extracellular side of the membrane. Positions 60–177 (DSFYYHVSFK…SSFKFSDIAM (118 aa)) constitute an SEA domain. N-linked (GlcNAc...) asparagine glycosylation is present at Asn99. The region spanning 200 to 430 (VAGGQDAEEG…YRDWITSKTG (231 aa)) is the Peptidase S1 domain. Residues Cys225 and Cys241 are joined by a disulfide bond. The Charge relay system role is filled by His240. The N-linked (GlcNAc...) asparagine glycan is linked to Asn276. The active-site Charge relay system is the Asp285. Asn347 carries N-linked (GlcNAc...) asparagine glycosylation. 2 cysteine pairs are disulfide-bonded: Cys350-Cys366 and Cys377-Cys406. The active-site Charge relay system is the Ser381.

This sequence belongs to the peptidase S1 family. In terms of processing, proteolytically cleaved via an autocatalytic mechanism. As to expression, expressed specifically in Purkinje neurons of the cerebellum (at protein level). Also detected in spinal cord.

Its subcellular location is the cell membrane. It localises to the cell projection. The protein resides in the dendrite. The protein localises to the perikaryon. Serine protease which has a preference for Arg or Lys in position P1 and uncharged residues in positions P2 and P3. Shows specificity towards FGF2 in vitro. The polypeptide is Transmembrane protease serine 11C (Mus musculus (Mouse)).